Here is a 220-residue protein sequence, read N- to C-terminus: Glutamine amidotransferase-like class 1 domain-containing protein 1 (220 aa).

A signal peptide spans 1-35; sequence MASERLPSRPACLLVASGAAEGVSAQSFLHCFTLA. N-linked (GlcNAc...) asparagine glycosylation is found at asparagine 57 and asparagine 201.

Belongs to the peptidase C56 family. In terms of assembly, homotetramer. Component of the FERRY complex composed of five subunits, TBCK, PPP1R21, FERRY3, CRYZL1 and GATD1 with a ratio of 1:2:1:2:4, respectively.

It localises to the secreted. Its subcellular location is the early endosome. In terms of biological role, component of the FERRY complex (Five-subunit Endosomal Rab5 and RNA/ribosome intermediary). The FERRY complex directly interacts with mRNAs and RAB5A, and functions as a RAB5A effector involved in the localization and the distribution of specific mRNAs most likely by mediating their endosomal transport. The complex recruits mRNAs and ribosomes to early endosomes through direct mRNA-interaction. In Bos taurus (Bovine), this protein is Glutamine amidotransferase-like class 1 domain-containing protein 1.